We begin with the raw amino-acid sequence, 116 residues long: Endoribonuclease EndoA (116 aa).

Belongs to the PemK/MazF family. Homodimer. Forms a complex with antitoxin EndoAI in which the toxin activity is inhibited. One dimer binds a ssRNA substrate, forms a heterohexamer composed of alternating toxin and antitoxin homodimers which inhibits the endoribonuclease activity. Antitoxin prevents RNA binding to the endoribonuclease.

Toxic component of a type II toxin-antitoxin (TA) system. Specific for 5'-UACAU-3' sequences, cleaving after the first U. Yields cleavage products with 3' phosphate and 5' hydroxyl groups. Cannot digest substrate with a UUdUACAUAA cleavage site. Overexpression is toxic for cell growth (shown in E.coli), probably by inhibiting protein synthesis through the cleavage of single-stranded RNA. The toxicity is reversed by the antitoxin EndoAI. Toxin activity cannot be inhibited by MazE from E.coli. The EndoA-EndoAI complex does not seem to bind its own promoter. The sequence is that of Endoribonuclease EndoA from Bacillus subtilis (strain 168).